We begin with the raw amino-acid sequence, 509 residues long: Cobyric acid synthase (509 aa).

The GATase cobBQ-type domain maps to 262–459 (EIKVGIIKLP…IHGIFENDIW (198 aa)). The Nucleophile role is filled by cysteine 343. The active site involves histidine 451.

The protein belongs to the CobB/CobQ family. CobQ subfamily.

Its pathway is cofactor biosynthesis; adenosylcobalamin biosynthesis. Functionally, catalyzes amidations at positions B, D, E, and G on adenosylcobyrinic A,C-diamide. NH(2) groups are provided by glutamine, and one molecule of ATP is hydrogenolyzed for each amidation. The chain is Cobyric acid synthase from Prochlorococcus marinus (strain MIT 9312).